Consider the following 292-residue polypeptide: High-affinity heme uptake system protein IsdE (292 aa).

Residues 1 to 19 form the signal peptide; it reads MRIIKYLTILVISVVILTS. A lipid anchor (N-palmitoyl cysteine) is attached at Cys-20. The S-diacylglycerol cysteine moiety is linked to residue Cys-20. Positions 35–291 constitute a Fe/B12 periplasmic-binding domain; the sequence is RIVPTTVALT…QLYDLFYKDK (257 aa). The heme site is built by Val-41, Ala-42, Ser-60, Tyr-61, Met-78, and His-229.

Belongs to the bacterial solute-binding protein 8 family. Heme b is required as a cofactor.

The protein localises to the cell membrane. Its function is as follows. Involved in heme (porphyrin) scavenging. Binds Fe(2+) and Fe(3+) heme but the largest fraction is Fe(2+) heme. Functions as a high-affinity heme binding protein and probably has a role in relaying heme-iron from cell wall-anchored isd proteins receptors to the probable permease IsdF. In Staphylococcus aureus (strain Mu3 / ATCC 700698), this protein is High-affinity heme uptake system protein IsdE (isdE).